The primary structure comprises 369 residues: Phospho-N-acetylmuramoyl-pentapeptide-transferase (369 aa).

Transmembrane regions (helical) follow at residues 30-50 (LAIFTAQFVVVAMGSRFIRWM), 74-94 (GTPTMGGVMILAGLLVGTLLW), 97-117 (LSNPYVWAVVLVTAGYGLLGF), 136-156 (IRLALEAFIAMAAVLIIIVFA), 177-197 (YFVDLSWGYLLFGAFIIVGAA), 208-228 (GLATVPVMIAAAAYGLIAYLV), 244-264 (GVGEIAVFCGALIGSGLGFLW), 272-292 (IFMGDTGSLALGGAVGAVAVA), 297-317 (IVLAIIGGLFVAETLSVIIQV), and 346-366 (TVVIRFWIVAIMLALVGLATL).

The protein belongs to the glycosyltransferase 4 family. MraY subfamily. Mg(2+) serves as cofactor.

It is found in the cell inner membrane. The enzyme catalyses UDP-N-acetyl-alpha-D-muramoyl-L-alanyl-gamma-D-glutamyl-meso-2,6-diaminopimeloyl-D-alanyl-D-alanine + di-trans,octa-cis-undecaprenyl phosphate = di-trans,octa-cis-undecaprenyl diphospho-N-acetyl-alpha-D-muramoyl-L-alanyl-D-glutamyl-meso-2,6-diaminopimeloyl-D-alanyl-D-alanine + UMP. The protein operates within cell wall biogenesis; peptidoglycan biosynthesis. In terms of biological role, catalyzes the initial step of the lipid cycle reactions in the biosynthesis of the cell wall peptidoglycan: transfers peptidoglycan precursor phospho-MurNAc-pentapeptide from UDP-MurNAc-pentapeptide onto the lipid carrier undecaprenyl phosphate, yielding undecaprenyl-pyrophosphoryl-MurNAc-pentapeptide, known as lipid I. This chain is Phospho-N-acetylmuramoyl-pentapeptide-transferase, found in Phenylobacterium zucineum (strain HLK1).